Reading from the N-terminus, the 89-residue chain is Small ribosomal subunit protein uS15 (89 aa).

It belongs to the universal ribosomal protein uS15 family. Part of the 30S ribosomal subunit. Forms a bridge to the 50S subunit in the 70S ribosome, contacting the 23S rRNA.

One of the primary rRNA binding proteins, it binds directly to 16S rRNA where it helps nucleate assembly of the platform of the 30S subunit by binding and bridging several RNA helices of the 16S rRNA. Its function is as follows. Forms an intersubunit bridge (bridge B4) with the 23S rRNA of the 50S subunit in the ribosome. This is Small ribosomal subunit protein uS15 from Shewanella amazonensis (strain ATCC BAA-1098 / SB2B).